The chain runs to 2025 residues: E3 ubiquitin-protein ligase TTC3 (2025 aa).

Positions 1 to 230 (MDNFAEGDFT…TQSCMDCIEE (230 aa)) are interaction with POLG. 2 TPR repeats span residues 231–264 (GELM…RPEN) and 266–298 (LLYG…KNTW). Phosphoserine; by PKB/AKT2 is present on serine 378. Residues 423-458 (DCHPEFSPPSSQPPKHKGKQKSRNNESEKFSSSSPL) form a disordered region. TPR repeat units follow at residues 536 to 572 (VLVV…YPSE) and 576 to 609 (CLAY…IYRL). A disordered region spans residues 786-805 (ERMEEDLRESNPPKNEEQKE). The segment covering 793–805 (RESNPPKNEEQKE) has biased composition (basic and acidic residues). Serine 1009 bears the Phosphoserine mark. Disordered stretches follow at residues 1012 to 1068 (APFS…GPFA), 1215 to 1295 (KPDV…SCNS), 1773 to 1842 (DPSV…SPKK), and 1894 to 1944 (ILDE…QKAE). Positions 1019-1029 (VKNKSKKKKPK) are enriched in basic residues. The span at 1038-1052 (SGTTSVTSNNEIITS) shows a compositional bias: polar residues. Serine 1061 is subject to Phosphoserine. Residues 1894 to 1912 (ILDEQKKKKPNPGKDKRTY) show a composition bias toward basic and acidic residues. Residues 1913-1928 (EPSSATPVTRSSQGSP) are compositionally biased toward polar residues. The RING-type zinc finger occupies 1957 to 1997 (CEICHEVFKSKNVRVLKCGHKYHKGCFKQWLKGQSACPACQ). Residues 2004-2025 (EESPSGRGWPSQNQELPSCSSR) are disordered. A compositionally biased stretch (polar residues) spans 2013-2025 (PSQNQELPSCSSR).

Interacts (when phosphorylated on Ser-378) with AKT1, AKT2 and AKT3 (when phosphorylated). Interacts with CIT. Interacts with POLG. Interacts with HSP70. Interacts with SMURF2. Post-translationally, phosphorylation on Ser-378 by Akt is required for ubiquitin ligase activity. Proteolytically cleaved into differently sized N- and C-terminal fragments. In terms of tissue distribution, found in all tissues examined.

Its subcellular location is the nucleus. The protein resides in the cytoplasm. It localises to the golgi apparatus. It catalyses the reaction S-ubiquitinyl-[E2 ubiquitin-conjugating enzyme]-L-cysteine + [acceptor protein]-L-lysine = [E2 ubiquitin-conjugating enzyme]-L-cysteine + N(6)-ubiquitinyl-[acceptor protein]-L-lysine.. It participates in protein modification; protein ubiquitination. Functionally, E3 ubiquitin-protein ligase which catalyzes the formation of 'Lys-48'-polyubiquitin chains. Mediates the ubiquitination and subsequent degradation of phosphorylated Akt (AKT1, AKT2 and AKT3) in the nucleus. Acts as a terminal regulator of Akt signaling after activation; its phosphorylation by Akt, which is a prerequisite for ubiquitin ligase activity, suggests the existence of a regulation mechanism required to control Akt levels after activation. Positively regulates TGFB1-induced epithelial-mesenchymal transition and myofibroblast differentiation by mediating the ubiquitination and subsequent degradation of SMURF2. Regulates neuronal differentiation by regulating actin remodeling and Golgi organization via a signaling cascade involving RHOA, CIT and ROCK. Inhibits cell proliferation. The chain is E3 ubiquitin-protein ligase TTC3 (TTC3) from Homo sapiens (Human).